The primary structure comprises 339 residues: UDP-N-acetylglucosamine--N-acetylmuramyl-(pentapeptide) pyrophosphoryl-undecaprenol N-acetylglucosamine transferase (339 aa).

Residues 11–13 (TGG), asparagine 127, arginine 170, serine 188, isoleucine 235, and glutamine 280 each bind UDP-N-acetyl-alpha-D-glucosamine.

This sequence belongs to the glycosyltransferase 28 family. MurG subfamily.

It is found in the cell inner membrane. It carries out the reaction di-trans,octa-cis-undecaprenyl diphospho-N-acetyl-alpha-D-muramoyl-L-alanyl-D-glutamyl-meso-2,6-diaminopimeloyl-D-alanyl-D-alanine + UDP-N-acetyl-alpha-D-glucosamine = di-trans,octa-cis-undecaprenyl diphospho-[N-acetyl-alpha-D-glucosaminyl-(1-&gt;4)]-N-acetyl-alpha-D-muramoyl-L-alanyl-D-glutamyl-meso-2,6-diaminopimeloyl-D-alanyl-D-alanine + UDP + H(+). It functions in the pathway cell wall biogenesis; peptidoglycan biosynthesis. Its function is as follows. Cell wall formation. Catalyzes the transfer of a GlcNAc subunit on undecaprenyl-pyrophosphoryl-MurNAc-pentapeptide (lipid intermediate I) to form undecaprenyl-pyrophosphoryl-MurNAc-(pentapeptide)GlcNAc (lipid intermediate II). The chain is UDP-N-acetylglucosamine--N-acetylmuramyl-(pentapeptide) pyrophosphoryl-undecaprenol N-acetylglucosamine transferase from Thermotoga maritima (strain ATCC 43589 / DSM 3109 / JCM 10099 / NBRC 100826 / MSB8).